We begin with the raw amino-acid sequence, 71 residues long: Prophage lysis protein S homolog EssQ (71 aa).

Belongs to the lambda phage S protein family.

The chain is Prophage lysis protein S homolog EssQ (essQ) from Escherichia coli (strain K12).